We begin with the raw amino-acid sequence, 93 residues long: Cell division topological specificity factor (93 aa).

It belongs to the MinE family.

Prevents the cell division inhibition by proteins MinC and MinD at internal division sites while permitting inhibition at polar sites. This ensures cell division at the proper site by restricting the formation of a division septum at the midpoint of the long axis of the cell. The chain is Cell division topological specificity factor from Agathobacter rectalis (strain ATCC 33656 / DSM 3377 / JCM 17463 / KCTC 5835 / VPI 0990) (Eubacterium rectale).